The primary structure comprises 584 residues: Aspartate--tRNA(Asp/Asn) ligase (584 aa).

Residue E174 participates in L-aspartate binding. Residues Q198–K201 are aspartate. R220 serves as a coordination point for L-aspartate. Residues R220 to E222 and Q229 each bind ATP. H447 is a binding site for L-aspartate. An ATP-binding site is contributed by E480. R487 is an L-aspartate binding site. Residue G532–R535 participates in ATP binding.

This sequence belongs to the class-II aminoacyl-tRNA synthetase family. Type 1 subfamily. As to quaternary structure, homodimer.

The protein resides in the cytoplasm. The catalysed reaction is tRNA(Asx) + L-aspartate + ATP = L-aspartyl-tRNA(Asx) + AMP + diphosphate. Functionally, aspartyl-tRNA synthetase with relaxed tRNA specificity since it is able to aspartylate not only its cognate tRNA(Asp) but also tRNA(Asn). Reaction proceeds in two steps: L-aspartate is first activated by ATP to form Asp-AMP and then transferred to the acceptor end of tRNA(Asp/Asn). The protein is Aspartate--tRNA(Asp/Asn) ligase of Endomicrobium trichonymphae.